A 501-amino-acid chain; its full sequence is Lysine--tRNA ligase (501 aa).

Residues Glu411 and Glu418 each contribute to the Mg(2+) site.

The protein belongs to the class-II aminoacyl-tRNA synthetase family. Homodimer. Mg(2+) is required as a cofactor.

It localises to the cytoplasm. It carries out the reaction tRNA(Lys) + L-lysine + ATP = L-lysyl-tRNA(Lys) + AMP + diphosphate. The chain is Lysine--tRNA ligase from Pseudomonas aeruginosa (strain UCBPP-PA14).